We begin with the raw amino-acid sequence, 506 residues long: Galactose/methyl galactoside import ATP-binding protein MglA (506 aa).

ABC transporter domains lie at 14–249 (LEMS…VGRS) and 264–506 (VILE…SLHL). Residue 46–53 (GENGAGKS) participates in ATP binding.

The protein belongs to the ABC transporter superfamily. Galactose/methyl galactoside importer (TC 3.A.1.2.3) family. The complex is composed of one ATP-binding protein (MglA), two transmembrane proteins (MglC) and a solute-binding protein (MglB).

Its subcellular location is the cell inner membrane. It catalyses the reaction D-galactose(out) + ATP + H2O = D-galactose(in) + ADP + phosphate + H(+). It carries out the reaction methyl beta-D-galactoside(out) + ATP + H2O = methyl beta-D-galactoside(in) + ADP + phosphate + H(+). Part of the ABC transporter complex MglABC involved in galactose/methyl galactoside import. Responsible for energy coupling to the transport system. This is Galactose/methyl galactoside import ATP-binding protein MglA from Escherichia coli (strain K12).